The primary structure comprises 208 residues: 2-phospho-L-lactate guanylyltransferase (208 aa).

The protein belongs to the CofC family. In terms of assembly, homodimer.

The catalysed reaction is (2S)-2-phospholactate + GTP + H(+) = (2S)-lactyl-2-diphospho-5'-guanosine + diphosphate. Its pathway is cofactor biosynthesis; coenzyme F420 biosynthesis. Guanylyltransferase that catalyzes the activation of (2S)-2-phospholactate (2-PL) as (2S)-lactyl-2-diphospho-5'-guanosine, via the condensation of 2-PL with GTP. It is involved in the biosynthesis of coenzyme F420, a hydride carrier cofactor. The chain is 2-phospho-L-lactate guanylyltransferase from Methanosarcina mazei (strain ATCC BAA-159 / DSM 3647 / Goe1 / Go1 / JCM 11833 / OCM 88) (Methanosarcina frisia).